A 175-amino-acid chain; its full sequence is Protein TWIN SISTER of FT (175 aa).

The protein belongs to the phosphatidylethanolamine-binding protein family.

The protein localises to the cytoplasm. Its function is as follows. May form complexes with phosphorylated ligands by interfering with kinases and their effectors. This chain is Protein TWIN SISTER of FT (TSF), found in Arabidopsis thaliana (Mouse-ear cress).